Consider the following 180-residue polypeptide: Crossover junction endodeoxyribonuclease RuvC (180 aa).

Catalysis depends on residues Asp7, Glu66, and Asp138. 3 residues coordinate Mg(2+): Asp7, Glu66, and Asp138.

This sequence belongs to the RuvC family. Homodimer which binds Holliday junction (HJ) DNA. The HJ becomes 2-fold symmetrical on binding to RuvC with unstacked arms; it has a different conformation from HJ DNA in complex with RuvA. In the full resolvosome a probable DNA-RuvA(4)-RuvB(12)-RuvC(2) complex forms which resolves the HJ. It depends on Mg(2+) as a cofactor.

It is found in the cytoplasm. The catalysed reaction is Endonucleolytic cleavage at a junction such as a reciprocal single-stranded crossover between two homologous DNA duplexes (Holliday junction).. The RuvA-RuvB-RuvC complex processes Holliday junction (HJ) DNA during genetic recombination and DNA repair. Endonuclease that resolves HJ intermediates. Cleaves cruciform DNA by making single-stranded nicks across the HJ at symmetrical positions within the homologous arms, yielding a 5'-phosphate and a 3'-hydroxyl group; requires a central core of homology in the junction. The consensus cleavage sequence is 5'-(A/T)TT(C/G)-3'. Cleavage occurs on the 3'-side of the TT dinucleotide at the point of strand exchange. HJ branch migration catalyzed by RuvA-RuvB allows RuvC to scan DNA until it finds its consensus sequence, where it cleaves and resolves the cruciform DNA. The sequence is that of Crossover junction endodeoxyribonuclease RuvC from Burkholderia orbicola (strain MC0-3).